The chain runs to 304 residues: Cell surface-binding protein OPG105 (304 aa).

In terms of domain architecture, Alpha-carbonic anhydrase spans 1-235 (MPQQLSPINI…NDDTQVYYSG (235 aa)). Over 1–275 (MPQQLSPINI…YQKYIEGNKT (275 aa)) the chain is Virion surface. Residues 276–294 (FAIIAIVFVFILTAILFLM) form a helical membrane-spanning segment. The Intravirion segment spans residues 295–304 (SRRYSREKQN).

It belongs to the alpha-carbonic anhydrase family. As to quaternary structure, homodimer; disulfide-linked. Post-translationally, apparently non-glycosylated.

The protein localises to the virion membrane. Binds to chondroitin sulfate on the cell surface to provide virion attachment to target cell. The chain is Cell surface-binding protein OPG105 (OPG105) from Vaccinia virus (strain Copenhagen) (VACV).